The following is a 471-amino-acid chain: Plant intracellular Ras-group-related LRR protein 2 (471 aa).

Residues 106-133 are a coiled coil; the sequence is VVRLDEVHDSYEKKLKDTEEELSRVYST. 10 LRR repeats span residues 159–182, 183–205, 206–229, 231–251, 253–275, 276–298, 300–321, 324–346, 347–369, and 371–392; these read GGTV…FWKV, VGLV…ISKL, KKLE…GMLL, LRIL…IAHC, SLVE…GYGL, QNLE…ISEM, NLKY…IGRL, LEVL…ITDL, TNLR…FYRL, and KLEK…VATQ. The short motif at 393 to 405 is the GVYW; degenerate element; it reads GAEVVREFMRKRW.

This sequence belongs to the SHOC2 family. As to expression, widely expressed but preferentially in roots.

Leucine-rich repeat protein that likely mediates protein interactions, possibly in the context of signal transduction. This chain is Plant intracellular Ras-group-related LRR protein 2 (PIRL2), found in Arabidopsis thaliana (Mouse-ear cress).